The following is a 434-amino-acid chain: 3-phosphoshikimate 1-carboxyvinyltransferase (434 aa).

3 residues coordinate 3-phosphoshikimate: K22, S23, and R27. A phosphoenolpyruvate-binding site is contributed by K22. The phosphoenolpyruvate site is built by G93 and R121. S168, S169, Q170, S199, D320, and K347 together coordinate 3-phosphoshikimate. Q170 is a binding site for phosphoenolpyruvate. D320 serves as the catalytic Proton acceptor. Phosphoenolpyruvate contacts are provided by R351, R394, and K419.

Belongs to the EPSP synthase family. Monomer.

Its subcellular location is the cytoplasm. It carries out the reaction 3-phosphoshikimate + phosphoenolpyruvate = 5-O-(1-carboxyvinyl)-3-phosphoshikimate + phosphate. It functions in the pathway metabolic intermediate biosynthesis; chorismate biosynthesis; chorismate from D-erythrose 4-phosphate and phosphoenolpyruvate: step 6/7. Its function is as follows. Catalyzes the transfer of the enolpyruvyl moiety of phosphoenolpyruvate (PEP) to the 5-hydroxyl of shikimate-3-phosphate (S3P) to produce enolpyruvyl shikimate-3-phosphate and inorganic phosphate. The protein is 3-phosphoshikimate 1-carboxyvinyltransferase of Paraburkholderia phytofirmans (strain DSM 17436 / LMG 22146 / PsJN) (Burkholderia phytofirmans).